Reading from the N-terminus, the 615-residue chain is Hypermethylated in cancer 2 protein (615 aa).

One can recognise a BTB domain in the interval 46–109 (CDVIIMVENS…IYTGKLLPSD (64 aa)). The disordered stretch occupies residues 144–167 (KPFGSGRAGSTGMGRPPRSQRLST). 3 positions are modified to phosphoserine: Ser-166, Ser-169, and Ser-197. Disordered regions lie at residues 182 to 208 (RKGAHAPQELPQAKGSDDELFLGGSNQ) and 229 to 421 (GCSS…SGHA). Residues 246–250 (GLDLS) are binding to CtBP. Residues 280–296 (SPPAASAPPVANSASYS) show a composition bias toward low complexity. Residues 336–356 (KKEWGKKEPVAGSPFERREAG) show a composition bias toward basic and acidic residues. The residue at position 348 (Ser-348) is a Phosphoserine. A compositionally biased stretch (low complexity) spans 379-388 (ASGAGPSGPY). Residue Ser-412 is modified to Phosphoserine. 5 C2H2-type zinc fingers span residues 442–469 (YVCIPCAKGFPSSEQLNAHVETHTEEEL), 505–532 (FKCSVCEKTYKDPATLRQHEKTHWLTRP), 533–560 (FPCNICGKMFTQRGTMTRHMRSHLGLKP), 561–588 (FACDECGMRFTRQYRLTEHMRVHSGEKP), and 589–615 (YECQLCGGKFTQQRNLISHLRMHTSPS).

It belongs to the krueppel C2H2-type zinc-finger protein family. Hic subfamily. Self-associates. Interacts with HIC1. In terms of tissue distribution, highest levels in cerebellum.

The protein localises to the nucleus. In terms of biological role, transcriptional repressor. In Homo sapiens (Human), this protein is Hypermethylated in cancer 2 protein (HIC2).